The sequence spans 144 residues: Bacilliredoxin BCE_2233 (144 aa).

Belongs to the bacilliredoxin family.

The protein is Bacilliredoxin BCE_2233 of Bacillus cereus (strain ATCC 10987 / NRS 248).